A 208-amino-acid polypeptide reads, in one-letter code: Interleukin-6 (208 aa).

Positions Met1 to Pro27 are cleaved as a signal peptide. Cys68 and Cys74 are joined by a disulfide. Ser77 bears the Phosphoserine mark. Cys97 and Cys107 are disulfide-bonded.

Belongs to the IL-6 superfamily. Component of a hexamer of two molecules each of IL6, IL6R and IL6ST; first binds to IL6R to associate with the signaling subunit IL6ST. Interacts with IL6R (via the N-terminal ectodomain); this interaction may be affected by IL6R-binding with SORL1, hence decreasing IL6 cis signaling. Interacts with SORL1 (via the N-terminal ectodomain); this interaction leads to IL6 internalization and lysosomal degradation. May form a trimeric complex with the soluble SORL1 ectodomain and soluble IL6R receptor; this interaction might stabilize circulating IL6, hence promoting IL6 trans signaling.

It is found in the secreted. Cytokine with a wide variety of biological functions in immunity, tissue regeneration, and metabolism. Binds to IL6R, then the complex associates to the signaling subunit IL6ST/gp130 to trigger the intracellular IL6-signaling pathway. The interaction with the membrane-bound IL6R and IL6ST stimulates 'classic signaling', whereas the binding of IL6 and soluble IL6R to IL6ST stimulates 'trans-signaling'. Alternatively, 'cluster signaling' occurs when membrane-bound IL6:IL6R complexes on transmitter cells activate IL6ST receptors on neighboring receiver cells. In terms of biological role, IL6 is a potent inducer of the acute phase response. Rapid production of IL6 contributes to host defense during infection and tissue injury, but excessive IL6 synthesis is involved in disease pathology. In the innate immune response, is synthesized by myeloid cells, such as macrophages and dendritic cells, upon recognition of pathogens through toll-like receptors (TLRs) at the site of infection or tissue injury. In the adaptive immune response, is required for the differentiation of B cells into immunoglobulin-secreting cells. Plays a major role in the differentiation of CD4(+) T cell subsets. Essential factor for the development of T follicular helper (Tfh) cells that are required for the induction of germinal-center formation. Required to drive naive CD4(+) T cells to the Th17 lineage. Also required for proliferation of myeloma cells and the survival of plasmablast cells. Its function is as follows. Acts as an essential factor in bone homeostasis and on vessels directly or indirectly by induction of VEGF, resulting in increased angiogenesis activity and vascular permeability. Induces, through 'trans-signaling' and synergistically with IL1B and TNF, the production of VEGF. Involved in metabolic controls, is discharged into the bloodstream after muscle contraction increasing lipolysis and improving insulin resistance. 'Trans-signaling' in central nervous system also regulates energy and glucose homeostasis. Mediates, through GLP-1, crosstalk between insulin-sensitive tissues, intestinal L cells and pancreatic islets to adapt to changes in insulin demand. Also acts as a myokine. Plays a protective role during liver injury, being required for maintenance of tissue regeneration. Also has a pivotal role in iron metabolism by regulating HAMP/hepcidin expression upon inflammation or bacterial infection. Through activation of IL6ST-YAP-NOTCH pathway, induces inflammation-induced epithelial regeneration. This chain is Interleukin-6 (IL6), found in Felis catus (Cat).